The sequence spans 775 residues: Serine/threonine-protein kinase ppk6 (775 aa).

Residues Ser132 and Ser134 each carry the phosphoserine modification. Residues 503–758 (YTTIKELGIG…IEETLQHHWF (256 aa)) enclose the Protein kinase domain. ATP contacts are provided by residues 509-517 (LGIGAYGQV) and Lys533. Asp636 acts as the Proton acceptor in catalysis.

The protein belongs to the protein kinase superfamily. Ser/Thr protein kinase family.

It is found in the cytoplasm. The protein resides in the nucleus. It carries out the reaction L-seryl-[protein] + ATP = O-phospho-L-seryl-[protein] + ADP + H(+). It catalyses the reaction L-threonyl-[protein] + ATP = O-phospho-L-threonyl-[protein] + ADP + H(+). The polypeptide is Serine/threonine-protein kinase ppk6 (ppk6) (Schizosaccharomyces pombe (strain 972 / ATCC 24843) (Fission yeast)).